The sequence spans 77 residues: uncharacterized protein (77 aa).

4Fe-4S ferredoxin-type domains follow at residues 3 to 32 (VEII…WTKD) and 36 to 65 (KYYA…IKVV). Positions 12, 15, 18, 22, 45, 48, 51, and 55 each coordinate [4Fe-4S] cluster.

It depends on [4Fe-4S] cluster as a cofactor.

Its function is as follows. Ferredoxins are iron-sulfur proteins that transfer electrons probably in the CO-dehydrogenase complex. This is an uncharacterized protein from Methanocaldococcus jannaschii (strain ATCC 43067 / DSM 2661 / JAL-1 / JCM 10045 / NBRC 100440) (Methanococcus jannaschii).